The following is a 159-amino-acid chain: Protein Smg homolog (159 aa).

Belongs to the Smg family.

This is Protein Smg homolog from Vibrio parahaemolyticus serotype O3:K6 (strain RIMD 2210633).